The sequence spans 77 residues: Metallocarboxypeptidase inhibitor (77 aa).

Residues 1 to 32 (MAQKFTILFTILLVVIAAQDVMAQDATLTKLF) form the signal peptide. Position 33 is a pyrrolidone carboxylic acid (Q33). 3 cysteine pairs are disulfide-bonded: C39–C55, C43–C58, and C49–C65. A propeptide spans 70–77 (GRAMAIGV) (hydrophobic peptide).

It to potato MCPI. In terms of tissue distribution, ovaries.

In terms of biological role, may play a defensive role against insect attacks. The sequence is that of Metallocarboxypeptidase inhibitor from Solanum lycopersicum (Tomato).